A 351-amino-acid chain; its full sequence is UPF0104 membrane protein MTH_887 (351 aa).

The next 8 helical transmembrane spans lie at Ile-20 to Phe-40, Ser-51 to Leu-71, Val-137 to Trp-157, Ile-165 to Gly-185, Phe-244 to Val-264, Ala-275 to Pro-295, Ile-304 to Val-324, and Ile-328 to Gln-348.

The protein belongs to the UPF0104 family.

It localises to the cell membrane. The sequence is that of UPF0104 membrane protein MTH_887 from Methanothermobacter thermautotrophicus (strain ATCC 29096 / DSM 1053 / JCM 10044 / NBRC 100330 / Delta H) (Methanobacterium thermoautotrophicum).